Reading from the N-terminus, the 539-residue chain is Carboxysome assembly protein CcmM (539 aa).

The tract at residues 1–214 (MPSPTTVPVA…PLRPSSSEAT (214 aa)) is carbonic anhydrase-like domain. The segment at 194–213 (TADFHSTPTPSPLRPSSSEA) is disordered. The RbcS-like repeat 1, SSUL1 repeat unit spans residues 226-397 (SSEVITQVRS…VLAELENCLS (172 aa)). 2 disulfides stabilise this stretch: C261–C279 and C377–C395. The stretch at 341–425 (LSAEVVNKVR…RVFEALIQDP (85 aa)) is one RbcS-like repeat 2, SSUL2 repeat. Positions 427–459 (GPVGSAKAAAAPVSSATPSSHSYTSNGSSSSDV) are disordered. Residues 431–457 (SAKAAAAPVSSATPSSHSYTSNGSSSS) are compositionally biased toward low complexity. One copy of the RbcS-like repeat 3, SSUL3 repeat lies at 453-539 (GSSSSDVAGQ…RVAELLIQKP (87 aa)).

It belongs to the gamma-class carbonic anhydrase family. In terms of assembly, probably a homotrimer. Purifies from carboxysomes in complex with both RuBisCO subunits and carbonic anhydrase (ccaA); the complex is probably associated with the carboxysome shell. Interacts with CcmN. Binds holo-RuBisCO (RbcL(8)-RbcS(8)) via its SSUL domains; the SSUL domain binds close to the equitorial domain of RuBisCO between RbcL dimers, with 1 M35 protein per dimer. The short form purifies from carboxysomes in complex with both RuBisCO subunits; the complex is probably associated with the carboxysome shell. Post-translationally, identified as 2 proteins of 58 and 38 kDa by mass spectrometry, called M58 and M35, the shorter protein is translated starting at Val-216. Protease inhibitors do not alter the appearance of M35. In isolated carboxysomes M35 is 4-5 fold more abundant. The first amino acid (equivalent to Val-216) is not seen in Edman degradation, while Tyr-219 and Gln-222 may be post-translationally modified.

It localises to the carboxysome. Functions as a scaffold protein for the assembly of beta-carboxysomes, initiates carboxysome assembly by coalescing RuBisCO (ribulose bisphosphate carboxylase, rbcL-rbcS). Produced as a full-length (M58) and a shorter form (M35); both forms are required for correct carboxysome assembly and growth. The short form is more abundant. Despite its strong similarity to gamma-class carbonic anhydrase (CA) it does not have detectable CA activity. Functionally, the M35 isoform is able to condense RuBisCO into a liquid matrix; the presence of disulfide bonds in M35 reduces affinity for RuBisCO, while mutating all 4 Cys to Ser causes a 4-fold increase in doubling time, more than 15% increase in CO(2) requirement, and abnormal carboxysomes. Its function is as follows. Beta-carboxysome assembly initiates when soluble RuBisCO is condensed into a liquid matrix in a pre-carboxysome by the RbcS-like domains of probably both CcmM58 and CcmM35. CcmN interacts with the N-terminus of CcmM58, and then recruits the CcmK2 major shell protein plus other less abundant CcmK proteins via CcmN's encapsulation peptide. Shell formation requires CcmK proteins and CcmO. CcmL caps the otherwise elongated carboxysome. Once fully encapsulated carboxysomes are formed, they migrate within the cell probably via interactions with the cytoskeleton. The sequence is that of Carboxysome assembly protein CcmM from Synechococcus elongatus (strain ATCC 33912 / PCC 7942 / FACHB-805) (Anacystis nidulans R2).